Here is a 1004-residue protein sequence, read N- to C-terminus: Polyhomeotic-like protein 1 (1004 aa).

The span at 1–22 (METESEQNSNSTNGSSSSGGSS) shows a compositional bias: low complexity. Disordered stretches follow at residues 1–24 (METE…SSRP), 212–241 (NQQA…SSLS), 261–355 (SLNL…NLTR), 432–512 (QQQQ…QLGA), 556–589 (RGMP…PPTL), and 636–672 (TLAV…SPKV). A compositionally biased stretch (polar residues) spans 212 to 228 (NQQASAQGPQMQGSTQK). Over residues 279 to 303 (MGPGGGGQAHGGLGQLPSSGMGGGS) the composition is skewed to gly residues. 2 stretches are compositionally biased toward polar residues: residues 319 to 329 (QTVTVSQGSQT) and 344 to 355 (SGQQNVGMNLTR). A compositionally biased stretch (low complexity) spans 432-447 (QQQQQQQQPQATTLTA). Residues 448–458 (PQPPQVPPTQQ) are compositionally biased toward pro residues. A compositionally biased stretch (low complexity) spans 459 to 482 (VPPSQSQQQAQTLVVQPMLQSSPL). Pro residues predominate over residues 483–495 (SLPPDAAPKPPIP). Residues 566–583 (QAHLASSPPSSQAPGALQ) show a composition bias toward low complexity. The residue at position 645 (Ser645) is a Phosphoserine. A Glycyl lysine isopeptide (Lys-Gly) (interchain with G-Cter in SUMO2) cross-link involves residue Lys763. The FCS-type zinc-finger motif lies at 791 to 825 (LDKKANLLKCEYCGKYAPAEQFRGSKRFCSMTCAK). Zn(2+) contacts are provided by Cys800, Cys803, Cys819, and Cys823. The disordered stretch occupies residues 848 to 928 (ANYARVRRRG…APPTPELHGI (81 aa)). The residue at position 898 (Ser898) is a Phosphoserine. Thr922 is modified (phosphothreonine). An SAM domain is found at 940 to 1004 (WSVEEVYEFI…CAKINVLKET (65 aa)).

As to quaternary structure, homodimer. Component of a PRC1-like complex. Interacts with RNF2 and CBX7. Interacts with PHC2, PHC2 and BMI1.

The protein resides in the nucleus. Component of a Polycomb group (PcG) multiprotein PRC1-like complex, a complex class required to maintain the transcriptionally repressive state of many genes, including Hox genes, throughout development. PcG PRC1 complex acts via chromatin remodeling and modification of histones; it mediates monoubiquitination of histone H2A 'Lys-119', rendering chromatin heritably changed in its expressibility. Required for proper control of cellular levels of GMNN expression. The sequence is that of Polyhomeotic-like protein 1 (PHC1) from Homo sapiens (Human).